A 108-amino-acid polypeptide reads, in one-letter code: Putative septation protein SpoVG (108 aa).

A disordered region spans residues 84 to 108 (FEKQSSVETEPVTEENMETAENENE). The span at 94–108 (PVTEENMETAENENE) shows a compositional bias: acidic residues.

It belongs to the SpoVG family.

In terms of biological role, could be involved in septation. This is Putative septation protein SpoVG from Finegoldia magna (strain ATCC 29328 / DSM 20472 / WAL 2508) (Peptostreptococcus magnus).